Reading from the N-terminus, the 354-residue chain is Chorismate synthase (354 aa).

An NADP(+)-binding site is contributed by Arg46. FMN contacts are provided by residues 123–125 (RSS), 239–240 (NA), Gly284, 299–303 (KPVAT), and Arg325.

This sequence belongs to the chorismate synthase family. Homotetramer. FMNH2 is required as a cofactor.

It catalyses the reaction 5-O-(1-carboxyvinyl)-3-phosphoshikimate = chorismate + phosphate. The protein operates within metabolic intermediate biosynthesis; chorismate biosynthesis; chorismate from D-erythrose 4-phosphate and phosphoenolpyruvate: step 7/7. Its function is as follows. Catalyzes the anti-1,4-elimination of the C-3 phosphate and the C-6 proR hydrogen from 5-enolpyruvylshikimate-3-phosphate (EPSP) to yield chorismate, which is the branch point compound that serves as the starting substrate for the three terminal pathways of aromatic amino acid biosynthesis. This reaction introduces a second double bond into the aromatic ring system. The sequence is that of Chorismate synthase from Azobacteroides pseudotrichonymphae genomovar. CFP2.